The primary structure comprises 496 residues: Cytochrome P450 71D180 (496 aa).

A helical; Signal-anchor for type II membrane protein membrane pass occupies residues 1–21 (MDISISWVVIIVFVLSYLILM). Residue Cys435 coordinates heme. The disordered stretch occupies residues 471-496 (MSETPGLSGPRKNPLIMIPTIHNPTS).

It belongs to the cytochrome P450 family. It depends on heme as a cofactor. As to expression, mostly expressed in flowers and stems, and, to a lower extent, in leaves.

The protein localises to the membrane. It carries out the reaction gamma-terpinene + 2 reduced [NADPH--hemoprotein reductase] + 2 O2 = carvacrol + 2 oxidized [NADPH--hemoprotein reductase] + 3 H2O + 2 H(+). It catalyses the reaction (4S)-limonene + reduced [NADPH--hemoprotein reductase] + O2 = (1S,5R)-carveol + oxidized [NADPH--hemoprotein reductase] + H2O + H(+). The enzyme catalyses (4R)-limonene + reduced [NADPH--hemoprotein reductase] + O2 = (1R,5S)-carveol + oxidized [NADPH--hemoprotein reductase] + H2O + H(+). It participates in secondary metabolite biosynthesis; terpenoid biosynthesis. Functionally, involved in the biosynthesis of phenolic monoterpenes natural products thymol and carvacrol which have a broad range of biological activities acting as antimicrobial compounds, insecticides, antioxidants and pharmaceutical agents. Catalyzes the C2-hydroxylation of gamma-terpinene to produce carvacrol. Also mediates the C6-hydroxylation of (4S)-limonene and (4R)-limonene to form carveol. The protein is Cytochrome P450 71D180 of Origanum vulgare (Wild marjoram).